The primary structure comprises 93 residues: UPF0457 protein GTNG_2792 (93 aa).

It belongs to the UPF0457 family.

The chain is UPF0457 protein GTNG_2792 from Geobacillus thermodenitrificans (strain NG80-2).